Reading from the N-terminus, the 310-residue chain is Fatty acid elongase 1 (310 aa).

At 1–63 (MVSDWKNFCL…VGKQPLSEPR (63 aa)) the chain is on the lumenal side. The chain crosses the membrane as a helical span at residues 64–84 (PVLLFIAMYYVVIFGGRSLVK). At 85–100 (SCKPLKLRFISQVHNL) the chain is on the cytoplasmic side. Residues 101–121 (MLTSVSFLWLILMVEQMLPIV) traverse the membrane as a helical segment. The Lumenal portion of the chain corresponds to 122–141 (YRHGLYFAVCNVESWTQPME). A helical transmembrane segment spans residues 142 to 163 (TLYYLNYMTKFVEFADTVLMVL). The Cytoplasmic segment spans residues 164-174 (KHRKLTFLHTY). The short motif at 172 to 176 (HTYHH) is the HxxHH motif element. The chain crosses the membrane as a helical span at residues 175 to 196 (HHGATALLCYNQLVGYTAVTWV). The Lumenal portion of the chain corresponds to 197–201 (PVTLN). Residues 202-223 (LAVHVLMYWYYFLSASGIRVWW) form a helical membrane-spanning segment. Residues 224–234 (KAWVTRLQIVQ) lie on the Cytoplasmic side of the membrane. A helical transmembrane segment spans residues 235 to 255 (FMLDLIVVYYVLYQKIVAAYF). The Lumenal segment spans residues 256 to 271 (KNACTPQCEDCLGSMT). Residues 272-292 (AIAAGAAILTSYLFLFISFYI) form a helical membrane-spanning segment. Topologically, residues 293–310 (EVYKRGSASGKKKINKNN) are cytoplasmic. A Di-lysine motif motif is present at residues 304–307 (KKIN).

Belongs to the ELO family.

The protein localises to the endoplasmic reticulum membrane. The enzyme catalyses a very-long-chain acyl-CoA + malonyl-CoA + H(+) = a very-long-chain 3-oxoacyl-CoA + CO2 + CoA. It carries out the reaction tetradecanoyl-CoA + malonyl-CoA + H(+) = 3-oxohexadecanoyl-CoA + CO2 + CoA. The catalysed reaction is (9Z)-tetradecenoyl-CoA + malonyl-CoA + H(+) = 3-oxo-(11Z)-hexadecenoyl-CoA + CO2 + CoA. Component of a microsomal membrane bound medium-chain fatty acid elongation system, which extends medium-chain-length fatty acids to long-chain fatty acids. Component of elongase I, which extends 12-16-carbon fatty acyl-CoAs such as lauroyl-CoA to 14-18-carbon fatty acids by incorporation of malonyl-CoA. In Saccharomyces cerevisiae (strain ATCC 204508 / S288c) (Baker's yeast), this protein is Fatty acid elongase 1.